We begin with the raw amino-acid sequence, 98 residues long: Large ribosomal subunit protein uL23 (98 aa).

The protein belongs to the universal ribosomal protein uL23 family. Part of the 50S ribosomal subunit. Contacts protein L29, and trigger factor when it is bound to the ribosome.

One of the early assembly proteins it binds 23S rRNA. One of the proteins that surrounds the polypeptide exit tunnel on the outside of the ribosome. Forms the main docking site for trigger factor binding to the ribosome. In Bordetella avium (strain 197N), this protein is Large ribosomal subunit protein uL23.